A 166-amino-acid polypeptide reads, in one-letter code: Large ribosomal subunit protein uL18c (166 aa).

The N-terminal 44 residues, 1-44, are a transit peptide targeting the chloroplast; that stretch reads MAAATSLSFFHSTLASSSSSSVQQLSLPPKFVNFRPQTLPLIQA.

This sequence belongs to the universal ribosomal protein uL18 family. In terms of assembly, component of the chloroplast large ribosomal subunit (LSU). Mature 70S chloroplast ribosomes of higher plants consist of a small (30S) and a large (50S) subunit. The 30S small subunit contains 1 molecule of ribosomal RNA (16S rRNA) and 24 different proteins. The 50S large subunit contains 3 rRNA molecules (23S, 5S and 4.5S rRNA) and 33 different proteins.

It localises to the plastid. It is found in the chloroplast. Functionally, component of the chloroplast ribosome (chloro-ribosome), a dedicated translation machinery responsible for the synthesis of chloroplast genome-encoded proteins, including proteins of the transcription and translation machinery and components of the photosynthetic apparatus. This chain is Large ribosomal subunit protein uL18c (RPL18), found in Spinacia oleracea (Spinach).